A 219-amino-acid polypeptide reads, in one-letter code: Ribose-5-phosphate isomerase A (219 aa).

Residues 28-31 (TGST), 81-84 (DGAD), and 94-97 (KGGG) each bind substrate. Glu-103 serves as the catalytic Proton acceptor. Lys-121 serves as a coordination point for substrate.

Belongs to the ribose 5-phosphate isomerase family. In terms of assembly, homodimer.

The catalysed reaction is aldehydo-D-ribose 5-phosphate = D-ribulose 5-phosphate. The protein operates within carbohydrate degradation; pentose phosphate pathway; D-ribose 5-phosphate from D-ribulose 5-phosphate (non-oxidative stage): step 1/1. Functionally, catalyzes the reversible conversion of ribose-5-phosphate to ribulose 5-phosphate. The polypeptide is Ribose-5-phosphate isomerase A (Shewanella frigidimarina (strain NCIMB 400)).